The following is a 43-amino-acid chain: S-layer protein 1 (43 aa).

The protein localises to the secreted. It localises to the cell wall. The protein resides in the S-layer. In terms of biological role, the S-layer is a paracrystalline mono-layered assembly of proteins which coat the surface of bacteria. The protein is S-layer protein 1 of Bacillus thuringiensis subsp. konkukian.